Reading from the N-terminus, the 383-residue chain is Dimethylsulfoniopropionate lyase 6 (383 aa).

This sequence belongs to the aspartate/glutamate racemases family. ALMA1 subfamily. As to quaternary structure, homotetramer.

It catalyses the reaction S,S-dimethyl-beta-propiothetin = acrylate + dimethyl sulfide + H(+). In terms of biological role, mediates cleavage of dimethylsulfoniopropionate (DMSP) into dimethyl sulfide (DMS) and acrylate. DMS is the principal form by which sulfur is transported from oceans to the atmosphere and is a key component of the ocean sulfur cycle. The sequence is that of Dimethylsulfoniopropionate lyase 6 from Emiliania huxleyi (strain CCMP1516).